The chain runs to 542 residues: Chaperonin GroEL 1 (542 aa).

Residues 29-32 (TIGP), 86-90 (DGTTT), Gly415, 479-481 (NAA), and Asp495 contribute to the ATP site.

This sequence belongs to the chaperonin (HSP60) family. In terms of assembly, forms a cylinder of 14 subunits composed of two heptameric rings stacked back-to-back. Interacts with the co-chaperonin GroES.

It is found in the cytoplasm. It catalyses the reaction ATP + H2O + a folded polypeptide = ADP + phosphate + an unfolded polypeptide.. Functionally, together with its co-chaperonin GroES, plays an essential role in assisting protein folding. The GroEL-GroES system forms a nano-cage that allows encapsulation of the non-native substrate proteins and provides a physical environment optimized to promote and accelerate protein folding. This is Chaperonin GroEL 1 from Streptomyces avermitilis (strain ATCC 31267 / DSM 46492 / JCM 5070 / NBRC 14893 / NCIMB 12804 / NRRL 8165 / MA-4680).